A 264-amino-acid polypeptide reads, in one-letter code: MEQYLQLCEHVLQNGSPKSDRTGTGTISVFGYQMRFDLEKGFPIVTTKKLHMRSIIHELLWFLKGDTNIRYLQENGVRIWNEWADENGDLGPVYGKQWRSWEGANGKTVDQITEVVEQIKTNPNSRRLIVNAWNVAEIEEMALAPCHCLFQFYVNDGKLSCQLYQRSADIFLGVPFNISSYALLTMMMAQVCGLKPGEFIHTFGDAHLYNNHIEQTKLQLTRKPKQLPTMHINPEVTDLFAFTYDDFELKHYDPYPHIKAEVSV.

Arg21 lines the dUMP pocket. His51 contributes to the (6R)-5,10-methylene-5,6,7,8-tetrahydrofolate binding site. 126-127 (RR) is a binding site for dUMP. Cys146 (nucleophile) is an active-site residue. Residues 166–169 (RSAD), Asn177, and 207–209 (HLY) each bind dUMP. Asp169 serves as a coordination point for (6R)-5,10-methylene-5,6,7,8-tetrahydrofolate. A (6R)-5,10-methylene-5,6,7,8-tetrahydrofolate-binding site is contributed by Ser263.

It belongs to the thymidylate synthase family. Bacterial-type ThyA subfamily. In terms of assembly, homodimer.

It is found in the cytoplasm. The catalysed reaction is dUMP + (6R)-5,10-methylene-5,6,7,8-tetrahydrofolate = 7,8-dihydrofolate + dTMP. It functions in the pathway pyrimidine metabolism; dTTP biosynthesis. Functionally, catalyzes the reductive methylation of 2'-deoxyuridine-5'-monophosphate (dUMP) to 2'-deoxythymidine-5'-monophosphate (dTMP) while utilizing 5,10-methylenetetrahydrofolate (mTHF) as the methyl donor and reductant in the reaction, yielding dihydrofolate (DHF) as a by-product. This enzymatic reaction provides an intracellular de novo source of dTMP, an essential precursor for DNA biosynthesis. The chain is Thymidylate synthase from Shouchella clausii (strain KSM-K16) (Alkalihalobacillus clausii).